Consider the following 553-residue polypeptide: Arginine--tRNA ligase (553 aa).

The 'HIGH' region signature appears at 130-140 (ANPTGPVHLGG).

It belongs to the class-I aminoacyl-tRNA synthetase family. Monomer.

It is found in the cytoplasm. The enzyme catalyses tRNA(Arg) + L-arginine + ATP = L-arginyl-tRNA(Arg) + AMP + diphosphate. This Saccharopolyspora erythraea (strain ATCC 11635 / DSM 40517 / JCM 4748 / NBRC 13426 / NCIMB 8594 / NRRL 2338) protein is Arginine--tRNA ligase.